Here is a 224-residue protein sequence, read N- to C-terminus: UPF0173 metal-dependent hydrolase TTHA1283 (224 aa).

This sequence belongs to the UPF0173 family.

This Thermus thermophilus (strain ATCC 27634 / DSM 579 / HB8) protein is UPF0173 metal-dependent hydrolase TTHA1283.